A 312-amino-acid polypeptide reads, in one-letter code: Thioredoxin reductase (312 aa).

33-43 (EGFFSGIAGGQ) provides a ligand contact to FAD. Cys-138 and Cys-141 are disulfide-bonded. 283–292 (DVQDKYYRQA) contributes to the FAD binding site.

Belongs to the class-II pyridine nucleotide-disulfide oxidoreductase family. As to quaternary structure, homodimer. Requires FAD as cofactor.

The protein resides in the cytoplasm. The enzyme catalyses [thioredoxin]-dithiol + NADP(+) = [thioredoxin]-disulfide + NADPH + H(+). The chain is Thioredoxin reductase (trxB) from Chlamydia trachomatis serovar D (strain ATCC VR-885 / DSM 19411 / UW-3/Cx).